The sequence spans 146 residues: Basic phospholipase A2 73 (146 aa).

Positions 1-19 (MYPAHLLVLLAVCVSLLGA) are cleaved as a signal peptide. Residues 20–27 (ASIPPLPL) constitute a propeptide that is removed on maturation. Disulfide bonds link C38–C98, C54–C145, C56–C72, C71–C126, C78–C119, C87–C112, and C105–C117. 3 residues coordinate Ca(2+): Y55, G57, and G59. Residue H75 is part of the active site. Position 76 (D76) interacts with Ca(2+). Residue D120 is part of the active site.

The protein belongs to the phospholipase A2 family. Group I subfamily. D49 sub-subfamily. Ca(2+) is required as a cofactor. Expressed by the venom gland.

The protein resides in the secreted. The catalysed reaction is a 1,2-diacyl-sn-glycero-3-phosphocholine + H2O = a 1-acyl-sn-glycero-3-phosphocholine + a fatty acid + H(+). Snake venom phospholipase A2 (PLA2) that inhibits neuromuscular transmission by blocking acetylcholine release from the nerve termini. PLA2 catalyzes the calcium-dependent hydrolysis of the 2-acyl groups in 3-sn-phosphoglycerides. This Hydrophis hardwickii (Hardwick's spine-bellied seasnake) protein is Basic phospholipase A2 73.